Consider the following 436-residue polypeptide: MSMFLDTAKIKVKAGNGGDGMVAFRREKYVPNGGPWGGDGGRGGNVVFVVDEGLRTLMDFRYNRHFKADSGEKGMTKGMHGRGAEDLRVRVPQGTTVRDAETGKVLTDLIEHGQEFIVAHGGRGGRGNIRFATPKNPAPEISENGEPGQERELQLELKILADVGLVGFPSVGKSTLLSVITSAKPKIGAYHFTTIVPNLGMVRTQSGESFAVADLPGLIEGASQGVGLGTQFLRHIERTRVILHIIDMSASEGRDPYEDYLAINKELESYNLRLMERPQIIVTNKMDMPESQENLEEFKKKLAENYDEFEELPAIFPISGLTKQGLATLLDATAELLDKTPEFLLYDESDMEEEVYYGFDEEEKAFEISRDDDATWVLSGEKLMKLFNMTNFDRDESVMKFARQLRGMGVDEALRARGAKDGDLVRIGKFEFEFVD.

The region spanning 2-160 (SMFLDTAKIK…RELQLELKIL (159 aa)) is the Obg domain. An OBG-type G domain is found at 161–338 (ADVGLVGFPS…LLDATAELLD (178 aa)). Residues 167–174 (GFPSVGKS), 192–196 (FTTIV), 214–217 (DLPG), 284–287 (NKMD), and 319–321 (SGL) contribute to the GTP site. Ser-174 and Thr-194 together coordinate Mg(2+). In terms of domain architecture, OCT spans 358 to 436 (GFDEEEKAFE…IGKFEFEFVD (79 aa)).

It belongs to the TRAFAC class OBG-HflX-like GTPase superfamily. OBG GTPase family. In terms of assembly, monomer. It depends on Mg(2+) as a cofactor.

Its subcellular location is the cytoplasm. In terms of biological role, an essential GTPase which binds GTP, GDP and possibly (p)ppGpp with moderate affinity, with high nucleotide exchange rates and a fairly low GTP hydrolysis rate. Plays a role in control of the cell cycle, stress response, ribosome biogenesis and in those bacteria that undergo differentiation, in morphogenesis control. In Streptococcus pneumoniae serotype 2 (strain D39 / NCTC 7466), this protein is GTPase Obg.